Reading from the N-terminus, the 588-residue chain is A-type ATP synthase subunit A (588 aa).

237-244 (GPFGSGKT) provides a ligand contact to ATP.

It belongs to the ATPase alpha/beta chains family. As to quaternary structure, has multiple subunits with at least A(3), B(3), C, D, E, F, H, I and proteolipid K(x).

The protein localises to the cell membrane. It carries out the reaction ATP + H2O + 4 H(+)(in) = ADP + phosphate + 5 H(+)(out). In terms of biological role, component of the A-type ATP synthase that produces ATP from ADP in the presence of a proton gradient across the membrane. The A chain is the catalytic subunit. The polypeptide is A-type ATP synthase subunit A (Methanoregula boonei (strain DSM 21154 / JCM 14090 / 6A8)).